The sequence spans 392 residues: Cyclic di-GMP phosphodiesterase RocR (392 aa).

The Response regulatory domain occupies 5-126 (NVLVLEDEPF…RITALLTRYN (122 aa)). Residue Asp56 is modified to 4-aspartylphosphate. An EAL domain is found at 140–392 (ELPSVADVVR…QHFLDYCSGS (253 aa)). Mg(2+) contacts are provided by Glu175, Asn233, Glu265, and Asp295. Catalysis depends on Glu352, which acts as the Proton acceptor.

Homotetramer. Exhibits a highly unusual tetrameric structure arranged around a single dyad, with the four subunits adopting two distinctly different conformations, with only two active sites accessible for substrate binding. Interacts with RocS1. Requires Mg(2+) as cofactor.

The enzyme catalyses 3',3'-c-di-GMP + H2O = 5'-phosphoguanylyl(3'-&gt;5')guanosine + H(+). Phosphorylation of Asp-56 probably induces local conformational changes in the response regulatory domain. These structural changes are transmitted to the adjacent EAL domain, then the signal is further transmitted down to the active site. The phosphodiesterase activity is inhibited by Ca(2+) and Zn(2+). Phosphodiesterase activity is inhibited by a benzoisothiazolinone derivative that specifically inhibited RocR, but not some other phosphodiesterases. Phosphodiesterase (PDE) that catalyzes the hydrolysis of cyclic diguanylate (c-di-GMP) to 5'-pGpG. Cannot use cyclic AMP or cyclic GMP. Part of the RocSAR two-component regulatory signaling system (also known as the SadARS system), which regulates biofilm maturation, type III secretion and expression of the cup fimbrial-gene cluster. Negatively regulates the expression of cup genes by antagonizing the activity of RocA1. The chain is Cyclic di-GMP phosphodiesterase RocR from Pseudomonas aeruginosa (strain ATCC 15692 / DSM 22644 / CIP 104116 / JCM 14847 / LMG 12228 / 1C / PRS 101 / PAO1).